Consider the following 156-residue polypeptide: Small ribosomal subunit protein uS7 (156 aa).

This sequence belongs to the universal ribosomal protein uS7 family. Part of the 30S ribosomal subunit. Contacts proteins S9 and S11.

One of the primary rRNA binding proteins, it binds directly to 16S rRNA where it nucleates assembly of the head domain of the 30S subunit. Is located at the subunit interface close to the decoding center, probably blocks exit of the E-site tRNA. In Pseudoalteromonas translucida (strain TAC 125), this protein is Small ribosomal subunit protein uS7.